The following is a 170-amino-acid chain: tRNA-specific adenosine deaminase 2 (170 aa).

In terms of domain architecture, CMP/dCMP-type deaminase spans 3–128 (EEIQNWMHKA…SVLNVAGDNI (126 aa)). His54 is a binding site for Zn(2+). Glu56 serves as the catalytic Proton donor. The Zn(2+) site is built by Cys90 and Cys93.

The protein belongs to the cytidine and deoxycytidylate deaminase family. ADAT2 subfamily. Requires Zn(2+) as cofactor.

The catalysed reaction is adenosine(34) in tRNA + H2O + H(+) = inosine(34) in tRNA + NH4(+). Functionally, probably participates in deamination of adenosine-34 to inosine in many tRNAs. The protein is tRNA-specific adenosine deaminase 2 (adat2) of Xenopus tropicalis (Western clawed frog).